Consider the following 159-residue polypeptide: Neuroglobin (159 aa).

The Globin domain maps to 3–151; the sequence is KLSEKDKELI…VVAAMSQGWA (149 aa). Heme b-binding residues include H66 and H98.

The protein belongs to the globin family. As to quaternary structure, monomer. Homodimers and homotetramers. Mainly monomeric but also detected as part of homodimers and homotetramers.

Its subcellular location is the cytoplasm. The protein resides in the cytosol. It is found in the mitochondrion matrix. It catalyses the reaction Fe(III)-heme b-[protein] + nitric oxide + H2O = Fe(II)-heme b-[protein] + nitrite + 2 H(+). Its function is as follows. Monomeric globin with a bis-histidyl six-coordinate heme-iron atom through which it can bind dioxygen, carbon monoxide and nitric oxide. Could help transport oxygen and increase its availability to the metabolically active neuronal tissues, though its low quantity in tissues as well as its high affinity for dioxygen, which may limit its oxygen-releasing ability, argue against it. The ferrous/deoxygenated form exhibits a nitrite reductase activity and it could produce nitric oxide which in turn inhibits cellular respiration in response to hypoxia. In its ferrous/deoxygenated state, it may also exhibit GDI (Guanine nucleotide Dissociation Inhibitor) activity toward heterotrimeric G-alpha proteins, thereby regulating signal transduction to facilitate neuroprotective responses in the wake of hypoxia and associated oxidative stress. This chain is Neuroglobin (ngb), found in Dissostichus mawsoni (Antarctic cod).